A 461-amino-acid chain; its full sequence is Bifunctional protein GlmU (461 aa).

The tract at residues 1–236 (MNVLLQELFI…VFEIFGINNR (236 aa)) is pyrophosphorylase. Residues Lys-27, Gln-80, 85–86 (GT), 109–111 (YGD), Gly-146, Glu-160, Asn-175, and Asn-234 each bind UDP-N-acetyl-alpha-D-glucosamine. Position 111 (Asp-111) interacts with Mg(2+). Asn-234 is a binding site for Mg(2+). The tract at residues 237-257 (FQLMKLEKIYQIEQAKKLLLN) is linker. An N-acetyltransferase region spans residues 258-461 (GVTLSDYNRF…SILRKENNSK (204 aa)). Residue Lys-358 coordinates UDP-N-acetyl-alpha-D-glucosamine. His-370 functions as the Proton acceptor in the catalytic mechanism. The UDP-N-acetyl-alpha-D-glucosamine site is built by Tyr-373 and Asn-384. Residues Ala-387, Ala-430, and Arg-447 each contribute to the acetyl-CoA site.

In the N-terminal section; belongs to the N-acetylglucosamine-1-phosphate uridyltransferase family. This sequence in the C-terminal section; belongs to the transferase hexapeptide repeat family. As to quaternary structure, homotrimer. It depends on Mg(2+) as a cofactor.

It is found in the cytoplasm. It catalyses the reaction alpha-D-glucosamine 1-phosphate + acetyl-CoA = N-acetyl-alpha-D-glucosamine 1-phosphate + CoA + H(+). The enzyme catalyses N-acetyl-alpha-D-glucosamine 1-phosphate + UTP + H(+) = UDP-N-acetyl-alpha-D-glucosamine + diphosphate. It functions in the pathway nucleotide-sugar biosynthesis; UDP-N-acetyl-alpha-D-glucosamine biosynthesis; N-acetyl-alpha-D-glucosamine 1-phosphate from alpha-D-glucosamine 6-phosphate (route II): step 2/2. The protein operates within nucleotide-sugar biosynthesis; UDP-N-acetyl-alpha-D-glucosamine biosynthesis; UDP-N-acetyl-alpha-D-glucosamine from N-acetyl-alpha-D-glucosamine 1-phosphate: step 1/1. It participates in bacterial outer membrane biogenesis; LPS lipid A biosynthesis. Functionally, catalyzes the last two sequential reactions in the de novo biosynthetic pathway for UDP-N-acetylglucosamine (UDP-GlcNAc). The C-terminal domain catalyzes the transfer of acetyl group from acetyl coenzyme A to glucosamine-1-phosphate (GlcN-1-P) to produce N-acetylglucosamine-1-phosphate (GlcNAc-1-P), which is converted into UDP-GlcNAc by the transfer of uridine 5-monophosphate (from uridine 5-triphosphate), a reaction catalyzed by the N-terminal domain. The protein is Bifunctional protein GlmU of Wigglesworthia glossinidia brevipalpis.